The chain runs to 218 residues: Peptide methionine sulfoxide reductase MsrA (218 aa).

Residue Cys-54 is part of the active site.

Belongs to the MsrA Met sulfoxide reductase family.

It catalyses the reaction L-methionyl-[protein] + [thioredoxin]-disulfide + H2O = L-methionyl-(S)-S-oxide-[protein] + [thioredoxin]-dithiol. The catalysed reaction is [thioredoxin]-disulfide + L-methionine + H2O = L-methionine (S)-S-oxide + [thioredoxin]-dithiol. In terms of biological role, has an important function as a repair enzyme for proteins that have been inactivated by oxidation. Catalyzes the reversible oxidation-reduction of methionine sulfoxide in proteins to methionine. This is Peptide methionine sulfoxide reductase MsrA from Azorhizobium caulinodans (strain ATCC 43989 / DSM 5975 / JCM 20966 / LMG 6465 / NBRC 14845 / NCIMB 13405 / ORS 571).